We begin with the raw amino-acid sequence, 191 residues long: Large ribosomal subunit protein bL9 (191 aa).

This sequence belongs to the bacterial ribosomal protein bL9 family.

Binds to the 23S rRNA. The protein is Large ribosomal subunit protein bL9 of Granulibacter bethesdensis (strain ATCC BAA-1260 / CGDNIH1).